Here is a 204-residue protein sequence, read N- to C-terminus: ADP-ribosylation factor-like protein 15 (204 aa).

GTP is bound by residues 39 to 46, 82 to 86, and 142 to 145; these read GLTGSGKT, ELGGA, and NHQD.

It belongs to the small GTPase superfamily. Arf family.

The polypeptide is ADP-ribosylation factor-like protein 15 (Arl15) (Mus musculus (Mouse)).